Consider the following 466-residue polypeptide: Ribulose bisphosphate carboxylase large chain (466 aa).

N6,N6,N6-trimethyllysine is present on Lys5. Substrate is bound by residues Asn114 and Thr164. Residue Lys166 is the Proton acceptor of the active site. Position 168 (Lys168) interacts with substrate. Mg(2+) contacts are provided by Lys192, Asp194, and Glu195. At Lys192 the chain carries N6-carboxylysine. Residue His285 is the Proton acceptor of the active site. Arg286, His318, and Ser370 together coordinate substrate.

Belongs to the RuBisCO large chain family. Type I subfamily. As to quaternary structure, heterohexadecamer of 8 large chains and 8 small chains; disulfide-linked. The disulfide link is formed within the large subunit homodimers. Mg(2+) serves as cofactor. In terms of processing, the disulfide bond which can form in the large chain dimeric partners within the hexadecamer appears to be associated with oxidative stress and protein turnover.

The protein localises to the plastid. It localises to the chloroplast. It carries out the reaction 2 (2R)-3-phosphoglycerate + 2 H(+) = D-ribulose 1,5-bisphosphate + CO2 + H2O. The catalysed reaction is D-ribulose 1,5-bisphosphate + O2 = 2-phosphoglycolate + (2R)-3-phosphoglycerate + 2 H(+). Functionally, ruBisCO catalyzes two reactions: the carboxylation of D-ribulose 1,5-bisphosphate, the primary event in carbon dioxide fixation, as well as the oxidative fragmentation of the pentose substrate in the photorespiration process. Both reactions occur simultaneously and in competition at the same active site. In Oxalis dillenii (Gray-green wood sorrel), this protein is Ribulose bisphosphate carboxylase large chain.